A 169-amino-acid polypeptide reads, in one-letter code: Peptide methionine sulfoxide reductase MsrA (169 aa).

C10 is an active-site residue.

The protein belongs to the MsrA Met sulfoxide reductase family.

It catalyses the reaction L-methionyl-[protein] + [thioredoxin]-disulfide + H2O = L-methionyl-(S)-S-oxide-[protein] + [thioredoxin]-dithiol. It carries out the reaction [thioredoxin]-disulfide + L-methionine + H2O = L-methionine (S)-S-oxide + [thioredoxin]-dithiol. In terms of biological role, has an important function as a repair enzyme for proteins that have been inactivated by oxidation. Catalyzes the reversible oxidation-reduction of methionine sulfoxide in proteins to methionine. This is Peptide methionine sulfoxide reductase MsrA from Streptococcus equi subsp. equi (strain 4047).